The chain runs to 489 residues: Serine/arginine-rich splicing factor 4 (489 aa).

One can recognise an RRM 1 domain in the interval 2 to 72; that stretch reads PRVYIGRLSY…ERVIVEHARG (71 aa). 2 disordered regions span residues 72 to 95 and 169 to 489; these read GPRR…GRDK and KIRL…HSRS. A phosphoserine mark is found at S78 and S84. One can recognise an RRM 2 domain in the interval 104 to 177; that stretch reads YRLIVENLSS…RKIRLVEDKP (74 aa). 2 stretches are compositionally biased toward basic residues: residues 179–206 and 214–246; these read SRRR…KSRS and SHSK…KKEK. The segment covering 247 to 279 has biased composition (basic and acidic residues); it reads SRSPSKDNKSRSRSRSPDKSRSKSKDHAEDKLQ. 3 positions are modified to phosphoserine: S289, S291, and S293. A compositionally biased stretch (basic and acidic residues) spans 293–332; the sequence is SRHDSKSRSRSQERRAEEERRRSVSRARSQEKSRSQEKSL. Residues 333-356 are compositionally biased toward basic residues; the sequence is LKSRSRSRSRSRSRSKDKRKGRKR. Basic and acidic residues-rich tracts occupy residues 357–370 and 394–426; these read SRDE…SKSE and KDTD…RAEG. 3 positions are modified to phosphoserine: S441, S453, and S455. Composition is skewed to basic residues over residues 456–469 and 479–489; these read RSKS…RSKS and SRSRSRSHSRS.

Belongs to the splicing factor SR family. Found in a pre-mRNA splicing complex with SRSF4/SFRS4, SRSF5/SFRS5, SNRNP70, SNRPA1, SRRM1 and SRRM2. Interacts with PNN. Post-translationally, extensively phosphorylated on serine residues in the RS domain.

The protein localises to the nucleus speckle. Functionally, plays a role in alternative splice site selection during pre-mRNA splicing. Represses the splicing of MAPT/Tau exon 10. The chain is Serine/arginine-rich splicing factor 4 (Srsf4) from Mus musculus (Mouse).